A 1352-amino-acid chain; its full sequence is Alpha-protein kinase 1 (1352 aa).

The Arf-GAP domain occupies 7–127 (DPNYGLLRSL…RWTSSLSTSD (121 aa)). The C4-type zinc finger occupies 25-48 (CAECNSANVPYVCIKLGVFICPTC). Disordered stretches follow at residues 123-164 (LSTS…NNNN), 219-380 (TQSQ…PQHH), 424-445 (QQQQ…NSEP), 457-484 (HNHH…GNNS), 503-560 (FVEE…GGVS), and 619-658 (IINN…TNQN). The segment covering 237-246 (GFSPFNSPRS) has biased composition (polar residues). Low complexity-rich tracts occupy residues 268 to 287 (NNSN…NNGN) and 298 to 318 (NNNN…NNNN). Polar residues-rich tracts occupy residues 329–352 (KTFS…SGNS) and 359–379 (HPTQ…SPQH). The stretch at 393–429 (TTQQQLQQQQLQLQQQLQQQLQQQQQQQQQQQQQQQS) forms a coiled coil. 2 stretches are compositionally biased toward basic residues: residues 458–470 (NHHH…HHKQ) and 510–523 (HQHP…RHHS). The span at 619 to 636 (IINNQNNQNNNNNNNTNN) shows a compositional bias: low complexity. A coiled-coil region spans residues 689 to 781 (YIQQQQQQQQ…QQQQQQHINL (93 aa)). Disordered regions lie at residues 786-863 (PLQS…TDED) and 901-979 (TSPI…PDAR). The span at 799–812 (PQHSSSQYMNQQGY) shows a compositional bias: polar residues. Positions 821 to 859 (QPQSPQQIQPQPLQQQIFQQVQQQQPQIPQQSPQPLQSS) are enriched in low complexity. Residues 906 to 915 (QQPPQPPQPV) show a composition bias toward pro residues. Positions 931 to 965 (QQQNGPTVPQQQQQQQQQQQQQQQQQQQQQQQQQP) are enriched in low complexity. Residues 990–1194 (RFDAKLGKWV…ICHYLGLSSV (205 aa)) enclose the Alpha-type protein kinase domain. ATP is bound at residue 1164–1169 (GKGNLG). Disordered regions lie at residues 1198 to 1234 (PAND…SFNF) and 1279 to 1352 (QQQQ…KLVS). Residues 1241–1320 (HVLEQLNQQQ…QQQQQQQQNG (80 aa)) are a coiled coil. A compositionally biased stretch (low complexity) spans 1279–1319 (QQQQQQQQQQQQQQQQNQQQNQQQNQQQQQQQQQQQQQQQN). A compositionally biased stretch (pro residues) spans 1321 to 1332 (HPPPQTPLPPTP). Residues 1334 to 1352 (QKDKPKIEVFGDILRKLVS) show a composition bias toward basic and acidic residues.

Belongs to the protein kinase superfamily. Alpha-type protein kinase family. ALPK subfamily.

This Dictyostelium discoideum (Social amoeba) protein is Alpha-protein kinase 1 (ak1).